The sequence spans 361 residues: Homer protein homolog 3 (361 aa).

The segment at 1-80 (MSTAREQPIF…TKTSQKFGQW (80 aa)) is required for interaction with NFATC2. Residues 1–113 (MSTAREQPIF…EKFQEVKEAA (113 aa)) form the WH1 domain. Residues 114–169 (RLAREKSQDGGELTSPALGLASHQVPPSPLVSANGPGEEKLFRSQSADAPGPTERE) form a disordered region. Residues Ser-120 and Ser-159 each carry the phosphoserine modification. Coiled coils occupy residues 191–243 (ALQD…SEVT) and 254–358 (GQSL…RLAE).

Belongs to the Homer family. As to quaternary structure, tetramer. Isoform 1 and isoform 2 encode coiled-coil structures that mediate homo- and heteromultimerization. Interacts with NFATC2; interaction is calcium independent; interaction competes with PPP3CA for NFATC2 binding; interaction is reduced by AKT activation. Interacts with NFATC1 and NFATC4. Interacts with SHANK1; forms a high-order complex at least composed of SHANK1 and HOMER3; the complex formation is regulated by CAMK2A-mediated phosphorylation.

The protein localises to the cytoplasm. Its subcellular location is the postsynaptic density. The protein resides in the synapse. Its function is as follows. Postsynaptic density scaffolding protein. Binds and cross-links cytoplasmic regions of GRM1, GRM5, ITPR1, DNM3, RYR1, RYR2, SHANK1 and SHANK3. By physically linking GRM1 and GRM5 with ER-associated ITPR1 receptors, it aids the coupling of surface receptors to intracellular calcium release. Isoforms can be differently regulated and may play an important role in maintaining the plasticity at glutamatergic synapses. Negatively regulates T cell activation by inhibiting the calcineurin-NFAT pathway. Acts by competing with calcineurin/PPP3CA for NFAT protein binding, hence preventing NFAT activation by PPP3CA. This chain is Homer protein homolog 3, found in Homo sapiens (Human).